The following is a 389-amino-acid chain: Putative F-box protein At3g10240 (389 aa).

The tract at residues 1-26 (MEQQEEKRKIKAYQRKSKRSKSGSSS) is disordered. Residues 9–21 (KIKAYQRKSKRSK) show a composition bias toward basic residues. An F-box domain is found at 21–66 (KSGSSSIPLDLVSEILLRLPEKSVARFRCVSKPWSSITTEPYFINL).

The polypeptide is Putative F-box protein At3g10240 (Arabidopsis thaliana (Mouse-ear cress)).